Here is an 845-residue protein sequence, read N- to C-terminus: RNA-directed RNA polymerase (845 aa).

248 to 255 (GLPYIGKT) lines the GTP pocket. The RdRp catalytic domain occupies 384-588 (MIYADNIYIL…ENERLIASAA (205 aa)). 2 disordered regions span residues 686–706 (PLDS…KKTL) and 799–845 (AGKS…RRNQ). Residues 833 to 845 (KNAKRREKQRRNQ) are compositionally biased toward basic residues.

In terms of assembly, interacts with VP3 in the cytoplasm. In terms of processing, exists in multiple phosphorylated forms.

It is found in the virion. It carries out the reaction RNA(n) + a ribonucleoside 5'-triphosphate = RNA(n+1) + diphosphate. RNA-dependent RNA polymerase which is found both free and covalently attached to the genomic RNA. May also contain guanylyl and methyl transferase activities. In Oncorhynchus mykiss (Rainbow trout), this protein is RNA-directed RNA polymerase (VP1).